A 608-amino-acid polypeptide reads, in one-letter code: Phosphogluconate dehydratase (608 aa).

[4Fe-4S] cluster contacts are provided by cysteine 154 and cysteine 221.

It belongs to the IlvD/Edd family. [4Fe-4S] cluster is required as a cofactor.

It carries out the reaction 6-phospho-D-gluconate = 2-dehydro-3-deoxy-6-phospho-D-gluconate + H2O. It participates in carbohydrate metabolism; Entner-Doudoroff pathway. Functionally, catalyzes the dehydration of 6-phospho-D-gluconate to 2-dehydro-3-deoxy-6-phospho-D-gluconate. This chain is Phosphogluconate dehydratase, found in Pseudomonas aeruginosa (strain ATCC 15692 / DSM 22644 / CIP 104116 / JCM 14847 / LMG 12228 / 1C / PRS 101 / PAO1).